A 404-amino-acid polypeptide reads, in one-letter code: Glucose-1-phosphate adenylyltransferase (404 aa).

Residues Y99, G164, 179-180 (EK), and S197 contribute to the alpha-D-glucose 1-phosphate site.

The protein belongs to the bacterial/plant glucose-1-phosphate adenylyltransferase family.

The enzyme catalyses alpha-D-glucose 1-phosphate + ATP + H(+) = ADP-alpha-D-glucose + diphosphate. The protein operates within capsule biogenesis; capsule polysaccharide biosynthesis. Its pathway is glycan biosynthesis; glycogen biosynthesis. Involved in the biosynthesis of ADP-glucose, a building block, required in the biosynthesis of maltose-1-phosphate (M1P) and in the elongation reactions to produce linear alpha-1,4-glucans. Catalyzes the reaction between ATP and alpha-D-glucose 1-phosphate (G1P) to produce pyrophosphate and ADP-Glc. The protein is Glucose-1-phosphate adenylyltransferase of Mycobacterium bovis (strain ATCC BAA-935 / AF2122/97).